We begin with the raw amino-acid sequence, 67 residues long: DNA-directed RNA polymerase subunit omega (67 aa).

The protein belongs to the RNA polymerase subunit omega family. The RNAP catalytic core consists of 2 alpha, 1 beta, 1 beta' and 1 omega subunit. When a sigma factor is associated with the core the holoenzyme is formed, which can initiate transcription.

It catalyses the reaction RNA(n) + a ribonucleoside 5'-triphosphate = RNA(n+1) + diphosphate. In terms of biological role, promotes RNA polymerase assembly. Latches the N- and C-terminal regions of the beta' subunit thereby facilitating its interaction with the beta and alpha subunits. This Bordetella pertussis (strain Tohama I / ATCC BAA-589 / NCTC 13251) protein is DNA-directed RNA polymerase subunit omega.